The primary structure comprises 291 residues: Bifunctional protein FolD (291 aa).

NADP(+) contacts are provided by residues 168 to 170 (GRG), T195, and V236.

Belongs to the tetrahydrofolate dehydrogenase/cyclohydrolase family. As to quaternary structure, homodimer.

The enzyme catalyses (6R)-5,10-methylene-5,6,7,8-tetrahydrofolate + NADP(+) = (6R)-5,10-methenyltetrahydrofolate + NADPH. The catalysed reaction is (6R)-5,10-methenyltetrahydrofolate + H2O = (6R)-10-formyltetrahydrofolate + H(+). It functions in the pathway one-carbon metabolism; tetrahydrofolate interconversion. In terms of biological role, catalyzes the oxidation of 5,10-methylenetetrahydrofolate to 5,10-methenyltetrahydrofolate and then the hydrolysis of 5,10-methenyltetrahydrofolate to 10-formyltetrahydrofolate. This Bifidobacterium longum (strain DJO10A) protein is Bifunctional protein FolD.